The sequence spans 716 residues: MSLHTGWPRTVNSSFLKKHRSSLCTCQHTSSVLPRSFSTTPDRHVQQSADFSSTSRSYDRLGRRAREKLLDREFFLSLLSSATTKREAKSYLARLKAQHPKSPDANKPEPEKSATAPTLPSGVNLGSFYGASRSVYESPVFRQGPSPSAPPSLEPVERLHLALVRLSTPQSLDDNIIDGVAKTLSQLNRLGLTCCVVVDPGTEGVASALRQVAIEQADRLAVAIQKQPDSKSLRLDSVFSIDPSRPGLPQVFSRKALLNPLRHGHTVILTPIAYTEDVPRAIIVPANDAVIALTKELAGLASIPDPDEDPMVTAERIGRLQKEVSLDRVILLDPLGGIPAFNRRQPSHVFINMEQEYDDIENELLQAREMVPATETSLLKAGPNSVADNNPISKFVHAEVVPVPSGSTPELKTAVPQRSAIEGHLENLRVAQKALAMLPAASSGIITSPFEVASSAQTSPTSEFSAVGTRRQRNPLIHNLLTDKPLLSSSLPMSRRGPTNNGQGAVYPVTSHTTFVKRGMPLTMLPNPWTEPWTPQSRPRLKLDDPSIDLPRLVHLIEDSFDRKLDVQDYLNRVNDRLAGLIIAGEYEGGAILTWELPPGVEDDGSEASNARMVPYLDKFAVLKRSQGAGGVADIVFNAMVRSCFPNGVCWRSRKNNPVNKWYFERSLGTWKLSDTNWTMFWTTPGLVEDSQKFRDYEAVCRSIQPSWADDTGVVD.

The N-terminal 44 residues, 1 to 44 (MSLHTGWPRTVNSSFLKKHRSSLCTCQHTSSVLPRSFSTTPDRH), are a transit peptide targeting the mitochondrion. Polar residues predominate over residues 37 to 56 (FSTTPDRHVQQSADFSSTSR). Disordered stretches follow at residues 37 to 58 (FSTT…SRSY) and 96 to 121 (KAQH…TLPS). Residues 101–112 (KSPDANKPEPEK) show a composition bias toward basic and acidic residues. The N-acetyltransferase domain occupies 537–706 (SRPRLKLDDP…YEAVCRSIQP (170 aa)).

It belongs to the acetyltransferase family.

Its subcellular location is the mitochondrion. The catalysed reaction is L-glutamate + acetyl-CoA = N-acetyl-L-glutamate + CoA + H(+). It functions in the pathway amino-acid biosynthesis; L-arginine biosynthesis; N(2)-acetyl-L-ornithine from L-glutamate: step 1/4. Its function is as follows. N-acetylglutamate synthase involved in arginine biosynthesis. The sequence is that of Amino-acid acetyltransferase, mitochondrial (arg2) from Aspergillus fumigatus (strain CBS 144.89 / FGSC A1163 / CEA10) (Neosartorya fumigata).